Consider the following 303-residue polypeptide: Probable porphobilinogen deaminase (303 aa).

Cysteine 240 is subject to S-(dipyrrolylmethanemethyl)cysteine.

Belongs to the HMBS family. Dipyrromethane is required as a cofactor.

The enzyme catalyses 4 porphobilinogen + H2O = hydroxymethylbilane + 4 NH4(+). Its pathway is porphyrin-containing compound metabolism; protoporphyrin-IX biosynthesis; coproporphyrinogen-III from 5-aminolevulinate: step 2/4. Its function is as follows. Tetrapolymerization of the monopyrrole PBG into the hydroxymethylbilane pre-uroporphyrinogen in several discrete steps. The chain is Probable porphobilinogen deaminase from Hyperthermus butylicus (strain DSM 5456 / JCM 9403 / PLM1-5).